The primary structure comprises 108 residues: MSSTQFDHVTVIKKSNVYFGGACISHTVQFEDGTKKTLGVILPTEQPLTFETHVPERMEIISGECRVKIADSNESELFRAGQSFYVPGNSVFKIETDEVLDYVCHLEG.

Belongs to the nucleoside phosphorylase PpnP family.

It carries out the reaction a purine D-ribonucleoside + phosphate = a purine nucleobase + alpha-D-ribose 1-phosphate. It catalyses the reaction adenosine + phosphate = alpha-D-ribose 1-phosphate + adenine. The enzyme catalyses cytidine + phosphate = cytosine + alpha-D-ribose 1-phosphate. The catalysed reaction is guanosine + phosphate = alpha-D-ribose 1-phosphate + guanine. It carries out the reaction inosine + phosphate = alpha-D-ribose 1-phosphate + hypoxanthine. It catalyses the reaction thymidine + phosphate = 2-deoxy-alpha-D-ribose 1-phosphate + thymine. The enzyme catalyses uridine + phosphate = alpha-D-ribose 1-phosphate + uracil. The catalysed reaction is xanthosine + phosphate = alpha-D-ribose 1-phosphate + xanthine. Functionally, catalyzes the phosphorolysis of diverse nucleosides, yielding D-ribose 1-phosphate and the respective free bases. Can use uridine, adenosine, guanosine, cytidine, thymidine, inosine and xanthosine as substrates. Also catalyzes the reverse reactions. The chain is Pyrimidine/purine nucleoside phosphorylase from Acinetobacter baumannii (strain AB307-0294).